The following is a 750-amino-acid chain: Photosystem I P700 chlorophyll a apoprotein A1 (750 aa).

8 consecutive transmembrane segments (helical) span residues 70-93 (VFSA…FHGA), 156-179 (LYCT…FHYH), 195-219 (LNHH…HVSL), 291-309 (IAHH…GHMY), 346-369 (WHAQ…HHMY), 385-411 (LSLF…IFMV), 433-455 (AIIS…LYIH), and 531-549 (FLVH…LILL). [4Fe-4S] cluster is bound by residues Cys-573 and Cys-582. A run of 2 helical transmembrane segments spans residues 589–610 (HVFL…HFSW) and 664–686 (LSAY…MFLF). His-675 is a chlorophyll a' binding site. Positions 683 and 691 each coordinate chlorophyll a. Position 692 (Trp-692) interacts with phylloquinone. The chain crosses the membrane as a helical span at residues 724 to 744 (AVGVTHYLLGGIATTWAFFLA).

The protein belongs to the PsaA/PsaB family. As to quaternary structure, the PsaA/B heterodimer binds the P700 chlorophyll special pair and subsequent electron acceptors. PSI consists of a core antenna complex that captures photons, and an electron transfer chain that converts photonic excitation into a charge separation. The eukaryotic PSI reaction center is composed of at least 11 subunits. It depends on P700 is a chlorophyll a/chlorophyll a' dimer, A0 is one or more chlorophyll a, A1 is one or both phylloquinones and FX is a shared 4Fe-4S iron-sulfur center. as a cofactor.

The protein localises to the plastid. It is found in the chloroplast thylakoid membrane. It carries out the reaction reduced [plastocyanin] + hnu + oxidized [2Fe-2S]-[ferredoxin] = oxidized [plastocyanin] + reduced [2Fe-2S]-[ferredoxin]. In terms of biological role, psaA and PsaB bind P700, the primary electron donor of photosystem I (PSI), as well as the electron acceptors A0, A1 and FX. PSI is a plastocyanin-ferredoxin oxidoreductase, converting photonic excitation into a charge separation, which transfers an electron from the donor P700 chlorophyll pair to the spectroscopically characterized acceptors A0, A1, FX, FA and FB in turn. Oxidized P700 is reduced on the lumenal side of the thylakoid membrane by plastocyanin. This is Photosystem I P700 chlorophyll a apoprotein A1 from Pelargonium hortorum (Common geranium).